Here is a 1058-residue protein sequence, read N- to C-terminus: Carbamoyl phosphate synthase large chain (1058 aa).

Residues 1–401 (MSKRKDIQKI…SLLKACRSLE (401 aa)) are carboxyphosphate synthetic domain. Residues Arg129, Arg169, Gly175, Gly176, Arg208, Ile210, Glu215, Gly241, Ile242, His243, Gln284, and Glu298 each coordinate ATP. Residues 133–327 (KQLMQELDQP…IAKLAAKIAV (195 aa)) form the ATP-grasp 1 domain. Residues Gln284, Glu298, and Asn300 each contribute to the Mg(2+) site. 3 residues coordinate Mn(2+): Gln284, Glu298, and Asn300. An oligomerization domain region spans residues 402–546 (IGVCHNEMTS…YSTYELENES (145 aa)). The segment at 547–929 (VQSNKESILV…ALYKAFEANN (383 aa)) is carbamoyl phosphate synthetic domain. One can recognise an ATP-grasp 2 domain in the interval 671 to 861 (EKALKELGIP…MAQIATKLIL (191 aa)). ATP-binding residues include Arg707, Ser746, Ile748, Glu752, Gly777, Val778, His779, Ser780, Gln820, and Glu832. 3 residues coordinate Mg(2+): Gln820, Glu832, and Asn834. Residues Gln820, Glu832, and Asn834 each coordinate Mn(2+). An MGS-like domain is found at 930–1058 (SHLSEFGQIV…ESRCFNIEAI (129 aa)). The interval 930–1058 (SHLSEFGQIV…ESRCFNIEAI (129 aa)) is allosteric domain.

This sequence belongs to the CarB family. As to quaternary structure, composed of two chains; the small (or glutamine) chain promotes the hydrolysis of glutamine to ammonia, which is used by the large (or ammonia) chain to synthesize carbamoyl phosphate. Tetramer of heterodimers (alpha,beta)4. Mg(2+) is required as a cofactor. It depends on Mn(2+) as a cofactor.

The catalysed reaction is hydrogencarbonate + L-glutamine + 2 ATP + H2O = carbamoyl phosphate + L-glutamate + 2 ADP + phosphate + 2 H(+). It catalyses the reaction hydrogencarbonate + NH4(+) + 2 ATP = carbamoyl phosphate + 2 ADP + phosphate + 2 H(+). It participates in amino-acid biosynthesis; L-arginine biosynthesis; carbamoyl phosphate from bicarbonate: step 1/1. It functions in the pathway pyrimidine metabolism; UMP biosynthesis via de novo pathway; (S)-dihydroorotate from bicarbonate: step 1/3. Its function is as follows. Large subunit of the glutamine-dependent carbamoyl phosphate synthetase (CPSase). CPSase catalyzes the formation of carbamoyl phosphate from the ammonia moiety of glutamine, carbonate, and phosphate donated by ATP, constituting the first step of 2 biosynthetic pathways, one leading to arginine and/or urea and the other to pyrimidine nucleotides. The large subunit (synthetase) binds the substrates ammonia (free or transferred from glutamine from the small subunit), hydrogencarbonate and ATP and carries out an ATP-coupled ligase reaction, activating hydrogencarbonate by forming carboxy phosphate which reacts with ammonia to form carbamoyl phosphate. In Streptococcus pyogenes serotype M5 (strain Manfredo), this protein is Carbamoyl phosphate synthase large chain.